Here is a 393-residue protein sequence, read N- to C-terminus: NAD(P)H-quinone oxidoreductase subunit H, chloroplastic (393 aa).

It belongs to the complex I 49 kDa subunit family. As to quaternary structure, NDH is composed of at least 16 different subunits, 5 of which are encoded in the nucleus.

It is found in the plastid. It localises to the chloroplast thylakoid membrane. It catalyses the reaction a plastoquinone + NADH + (n+1) H(+)(in) = a plastoquinol + NAD(+) + n H(+)(out). The enzyme catalyses a plastoquinone + NADPH + (n+1) H(+)(in) = a plastoquinol + NADP(+) + n H(+)(out). Its function is as follows. NDH shuttles electrons from NAD(P)H:plastoquinone, via FMN and iron-sulfur (Fe-S) centers, to quinones in the photosynthetic chain and possibly in a chloroplast respiratory chain. The immediate electron acceptor for the enzyme in this species is believed to be plastoquinone. Couples the redox reaction to proton translocation, and thus conserves the redox energy in a proton gradient. In Ranunculus macranthus (Large buttercup), this protein is NAD(P)H-quinone oxidoreductase subunit H, chloroplastic.